The primary structure comprises 268 residues: Large ribosomal subunit protein bL9m (268 aa).

The transit peptide at 1-52 (MAAAAFAVPRGVQLRVLTERLLRGGVRELLRPRLSGSTPGSERDFSLSHSRG) directs the protein to the mitochondrion.

Belongs to the bacterial ribosomal protein bL9 family. Component of the mitochondrial ribosome large subunit (39S) which comprises a 16S rRNA and about 50 distinct proteins.

Its subcellular location is the mitochondrion. This is Large ribosomal subunit protein bL9m (MRPL9) from Bos taurus (Bovine).